A 554-amino-acid polypeptide reads, in one-letter code: (E)-nerolidol synthase TPS18VF (554 aa).

Residues Arg276, Asp313, Asp317, Arg455, and Asp458 each contribute to the (2E,6E)-farnesyl diphosphate site. Residues Asp313 and Asp317 each contribute to the Mg(2+) site. The DDXXD motif signature appears at 313-317 (DDIFD). Mg(2+) is bound by residues Asp458, Ser462, and Glu466.

This sequence belongs to the terpene synthase family. Tpsb subfamily. Mg(2+) serves as cofactor. Mn(2+) is required as a cofactor. In terms of tissue distribution, highly expressed in glandular trichomes.

It carries out the reaction (2E,6E)-farnesyl diphosphate + H2O = (6E)-nerolidol + diphosphate. The catalysed reaction is (2E)-geranyl diphosphate + H2O = (S)-linalool + diphosphate. It functions in the pathway secondary metabolite biosynthesis; terpenoid biosynthesis. Its function is as follows. Involved in sesquiterpene olefins biosynthesis, constituants of cannabinoids and terpenoids-rich resins. Catalyzes primarily the conversion of (2E)-farnesyl diphosphate to (E)-nerolidol, and the conversion of (2E)-geranyl diphosphate to (+)linalool. The chain is (E)-nerolidol synthase TPS18VF from Cannabis sativa (Hemp).